The primary structure comprises 242 residues: Ribosomal RNA small subunit methyltransferase G (242 aa).

S-adenosyl-L-methionine contacts are provided by residues G82, F87, 133–134 (AE), and R152.

The protein belongs to the methyltransferase superfamily. RNA methyltransferase RsmG family.

Its subcellular location is the cytoplasm. Its function is as follows. Specifically methylates the N7 position of a guanine in 16S rRNA. In Acetivibrio thermocellus (strain ATCC 27405 / DSM 1237 / JCM 9322 / NBRC 103400 / NCIMB 10682 / NRRL B-4536 / VPI 7372) (Clostridium thermocellum), this protein is Ribosomal RNA small subunit methyltransferase G.